Here is a 207-residue protein sequence, read N- to C-terminus: MSYSGERDNFAPHMALVPMVIEQTSRGERSFDIYSRLLKERVIFLTGQVEDHMANLIVAQMLFLEAENPEKDIYLYINSPGGVITAGMSIYDTMQFIKPDVSTICMGQAASMGAFLLTAGAKGKRFCLPNSRVMIHQPLGGYQGQATDIEIHAREILKVKGRMNELMALHTGQSLEQIERDTERDRFLSAPEAVEYGLVDSILTHRN.

Ser-111 serves as the catalytic Nucleophile. His-136 is an active-site residue.

It belongs to the peptidase S14 family. As to quaternary structure, fourteen ClpP subunits assemble into 2 heptameric rings which stack back to back to give a disk-like structure with a central cavity, resembling the structure of eukaryotic proteasomes. Component of the ClpAP and ClpXP complexes.

Its subcellular location is the cytoplasm. The catalysed reaction is Hydrolysis of proteins to small peptides in the presence of ATP and magnesium. alpha-casein is the usual test substrate. In the absence of ATP, only oligopeptides shorter than five residues are hydrolyzed (such as succinyl-Leu-Tyr-|-NHMec, and Leu-Tyr-Leu-|-Tyr-Trp, in which cleavage of the -Tyr-|-Leu- and -Tyr-|-Trp bonds also occurs).. Cleaves peptides in various proteins in a process that requires ATP hydrolysis. Has a chymotrypsin-like activity. Plays a major role in the degradation of misfolded proteins. The protein is ATP-dependent Clp protease proteolytic subunit of Escherichia coli O139:H28 (strain E24377A / ETEC).